The primary structure comprises 450 residues: Adenylosuccinate lyase (450 aa).

N(6)-(1,2-dicarboxyethyl)-AMP-binding positions include 9–10 (RY), 75–77 (HHD), and 101–102 (TS). His149 acts as the Proton donor/acceptor in catalysis. Gln223 provides a ligand contact to N(6)-(1,2-dicarboxyethyl)-AMP. The active-site Proton donor/acceptor is the Ser273. N(6)-(1,2-dicarboxyethyl)-AMP is bound by residues Ser274, 279 to 281 (KRN), and 318 to 322 (SVERV).

The protein belongs to the lyase 1 family. Adenylosuccinate lyase subfamily. Homotetramer. Residues from neighboring subunits contribute catalytic and substrate-binding residues to each active site.

It carries out the reaction N(6)-(1,2-dicarboxyethyl)-AMP = fumarate + AMP. It catalyses the reaction (2S)-2-[5-amino-1-(5-phospho-beta-D-ribosyl)imidazole-4-carboxamido]succinate = 5-amino-1-(5-phospho-beta-D-ribosyl)imidazole-4-carboxamide + fumarate. Its pathway is purine metabolism; AMP biosynthesis via de novo pathway; AMP from IMP: step 2/2. It participates in purine metabolism; IMP biosynthesis via de novo pathway; 5-amino-1-(5-phospho-D-ribosyl)imidazole-4-carboxamide from 5-amino-1-(5-phospho-D-ribosyl)imidazole-4-carboxylate: step 2/2. In terms of biological role, catalyzes two reactions in de novo purine nucleotide biosynthesis. Catalyzes the breakdown of 5-aminoimidazole- (N-succinylocarboxamide) ribotide (SAICAR or 2-[5-amino-1-(5-phospho-beta-D-ribosyl)imidazole-4-carboxamido]succinate) to 5-aminoimidazole-4-carboxamide ribotide (AICAR or 5-amino-1-(5-phospho-beta-D-ribosyl)imidazole-4-carboxamide) and fumarate, and of adenylosuccinate (ADS or N(6)-(1,2-dicarboxyethyl)-AMP) to adenosine monophosphate (AMP) and fumarate. This Pyrococcus horikoshii (strain ATCC 700860 / DSM 12428 / JCM 9974 / NBRC 100139 / OT-3) protein is Adenylosuccinate lyase (purB).